The chain runs to 607 residues: Guanine nucleotide-binding protein-like 1 (607 aa).

Over residues 1 to 14 (MPRKKPFSVKQKKK) the composition is skewed to basic residues. Residues 1 to 81 (MPRKKPFSVK…GPRGYDPNRY (81 aa)) form a disordered region. Residues 15–26 (QLQDKRERKRGL) show a composition bias toward basic and acidic residues. Phosphoserine is present on residues Ser32, Ser33, and Ser34. Phosphothreonine occurs at positions 48 and 50. 2 positions are modified to phosphoserine: Ser51 and Ser68. The CP-type G domain maps to 178–418 (WRQLWRVLEM…LCDCPGLIFP (241 aa)). 225–228 (NKVD) contributes to the GTP binding site. Ser324 is subject to Phosphoserine. GTP is bound by residues 367-374 (GFPNVGKS) and 411-415 (DCPGL). The disordered stretch occupies residues 547 to 607 (GPAGDEEEEE…PYALLGEDEC (61 aa)). Residues 550-584 (GDEEEEEEEELSSSCEEEGEEDRDADEEGEGDEET) show a composition bias toward acidic residues. Residues Ser561, Ser562, and Ser563 each carry the phosphoserine modification.

It belongs to the TRAFAC class YlqF/YawG GTPase family.

Its function is as follows. Possible regulatory or functional link with the histocompatibility cluster. In Pan troglodytes (Chimpanzee), this protein is Guanine nucleotide-binding protein-like 1 (GNL1).